A 61-amino-acid polypeptide reads, in one-letter code: Large ribosomal subunit protein uL30 (61 aa).

It belongs to the universal ribosomal protein uL30 family. In terms of assembly, part of the 50S ribosomal subunit.

The chain is Large ribosomal subunit protein uL30 from Lacticaseibacillus casei (strain BL23) (Lactobacillus casei).